The following is a 189-amino-acid chain: uncharacterized protein (189 aa).

This is an uncharacterized protein from Aquifex aeolicus (strain VF5).